The sequence spans 466 residues: 3-isopropylmalate dehydratase large subunit (466 aa).

[4Fe-4S] cluster is bound by residues Cys347, Cys407, and Cys410.

The protein belongs to the aconitase/IPM isomerase family. LeuC type 1 subfamily. Heterodimer of LeuC and LeuD. [4Fe-4S] cluster is required as a cofactor.

The catalysed reaction is (2R,3S)-3-isopropylmalate = (2S)-2-isopropylmalate. It functions in the pathway amino-acid biosynthesis; L-leucine biosynthesis; L-leucine from 3-methyl-2-oxobutanoate: step 2/4. Functionally, catalyzes the isomerization between 2-isopropylmalate and 3-isopropylmalate, via the formation of 2-isopropylmaleate. This chain is 3-isopropylmalate dehydratase large subunit, found in Buchnera aphidicola subsp. Diuraphis noxia.